Reading from the N-terminus, the 171-residue chain is MDKKSLYKYLLLRSTGDMHRAKSPTIMTRVTNNVYLGNYKNAMDAPSSEVKFKYVLNLTMDKYTLPNSNINIIHIPLVDDTTTDISKYFDDVTAFLSKCDQRNEPVLVHCVAGVNRSGAMILAYLMSKNKESSPMLYFLYVYHSMRDLRGAFVENPSFKRQIIEKYVIDKN.

Belongs to the protein-tyrosine phosphatase family. Non-receptor class dual specificity subfamily. Homodimer.

It is found in the virion. The protein resides in the host cytoplasm. It carries out the reaction O-phospho-L-tyrosyl-[protein] + H2O = L-tyrosyl-[protein] + phosphate. It catalyses the reaction O-phospho-L-seryl-[protein] + H2O = L-seryl-[protein] + phosphate. In terms of biological role, serine/tyrosine phosphatase which down-regulates cellular antiviral response by dephosphorylating activated host STAT1 and blocking interferon (IFN)-stimulated innate immune responses. Dephosphorylates the OPG144 protein. The polypeptide is Dual specificity protein phosphatase OPG106 (OPG106) (Monkeypox virus).